A 396-amino-acid polypeptide reads, in one-letter code: Tryptophan synthase beta chain (396 aa).

N6-(pyridoxal phosphate)lysine is present on lysine 88.

Belongs to the TrpB family. Tetramer of two alpha and two beta chains. The cofactor is pyridoxal 5'-phosphate.

It carries out the reaction (1S,2R)-1-C-(indol-3-yl)glycerol 3-phosphate + L-serine = D-glyceraldehyde 3-phosphate + L-tryptophan + H2O. It functions in the pathway amino-acid biosynthesis; L-tryptophan biosynthesis; L-tryptophan from chorismate: step 5/5. In terms of biological role, the beta subunit is responsible for the synthesis of L-tryptophan from indole and L-serine. This chain is Tryptophan synthase beta chain, found in Shewanella baltica (strain OS195).